Reading from the N-terminus, the 367-residue chain is Ferrochelatase (367 aa).

Fe cation contacts are provided by His226 and Glu307.

This sequence belongs to the ferrochelatase family.

Its subcellular location is the cytoplasm. It carries out the reaction heme b + 2 H(+) = protoporphyrin IX + Fe(2+). Its pathway is porphyrin-containing compound metabolism; protoheme biosynthesis; protoheme from protoporphyrin-IX: step 1/1. Its function is as follows. Catalyzes the ferrous insertion into protoporphyrin IX. The protein is Ferrochelatase of Burkholderia mallei (strain NCTC 10247).